The chain runs to 75 residues: Lipid-anchored plasma membrane protein CPP2 (75 aa).

Residues 1–43 are disordered; the sequence is MSQQQGYYQQGPPQQGYYQQGPPQQGYYQQGPPQQGYPQQQPV. 3 tandem repeats follow at residues 4-13, 14-23, and 24-33. Positions 4–33 are 3 X 10 AA tandem repeats of Q-Q-G-Y-Y-Q-Q-G-P-P; it reads QQGYYQQGPPQQGYYQQGPPQQGYYQQGPP.

Belongs to the CYSTM1 family. Palmitoylated near the C-terminus.

The protein resides in the cell membrane. The chain is Lipid-anchored plasma membrane protein CPP2 from Saccharomyces cerevisiae (strain ATCC 204508 / S288c) (Baker's yeast).